A 251-amino-acid polypeptide reads, in one-letter code: Cell division protein ZapD (251 aa).

This sequence belongs to the ZapD family. As to quaternary structure, interacts with FtsZ.

Its subcellular location is the cytoplasm. In terms of biological role, cell division factor that enhances FtsZ-ring assembly. Directly interacts with FtsZ and promotes bundling of FtsZ protofilaments, with a reduction in FtsZ GTPase activity. This is Cell division protein ZapD from Burkholderia lata (strain ATCC 17760 / DSM 23089 / LMG 22485 / NCIMB 9086 / R18194 / 383).